A 129-amino-acid chain; its full sequence is Follitropin subunit beta (129 aa).

The signal sequence occupies residues 1–20; the sequence is MKTAQFYVLFFCWKAIWCNG. Cystine bridges form between C21/C69, C35/C84, C38/C122, C46/C100, C50/C102, and C105/C112. N25 and N42 each carry an N-linked (GlcNAc...) asparagine glycan.

Belongs to the glycoprotein hormones subunit beta family. In terms of assembly, heterodimer. The active follitropin is a heterodimer composed of an alpha chain/CGA shared with other hormones and a unique beta chain/FSHB shown here.

The protein resides in the secreted. In terms of biological role, together with the alpha chain CGA constitutes follitropin, the follicle-stimulating hormone, and provides its biological specificity to the hormone heterodimer. Binds FSHR, a G protein-coupled receptor, on target cells to activate downstream signaling pathways. Follitropin is involved in follicle development and spermatogenesis in reproductive organs. The sequence is that of Follitropin subunit beta (FSHB) from Trichosurus vulpecula (Brush-tailed possum).